The following is a 927-amino-acid chain: DNA mismatch repair protein MutS (927 aa).

The tract at residues 44-80 (DESLKRPRNRHKPTSVPSIPLDSESQEQLETADNDND) is disordered. Over residues 67 to 79 (ESQEQLETADNDN) the composition is skewed to acidic residues. 725 to 732 (GPNASGKS) serves as a coordination point for ATP.

It belongs to the DNA mismatch repair MutS family.

This protein is involved in the repair of mismatches in DNA. It is possible that it carries out the mismatch recognition step. This protein has a weak ATPase activity. The protein is DNA mismatch repair protein MutS of Prochlorococcus marinus (strain MIT 9303).